We begin with the raw amino-acid sequence, 222 residues long: Triosephosphate isomerase (222 aa).

Asparagine 9 to lysine 11 serves as a coordination point for substrate. Histidine 93 acts as the Electrophile in catalysis. Glutamate 141 functions as the Proton acceptor in the catalytic mechanism. Substrate contacts are provided by residues isoleucine 146, glycine 181, and alanine 202–serine 203.

The protein belongs to the triosephosphate isomerase family. Homotetramer; dimer of dimers.

The protein resides in the cytoplasm. The enzyme catalyses D-glyceraldehyde 3-phosphate = dihydroxyacetone phosphate. It functions in the pathway carbohydrate biosynthesis; gluconeogenesis. The protein operates within carbohydrate degradation; glycolysis; D-glyceraldehyde 3-phosphate from glycerone phosphate: step 1/1. Functionally, involved in the gluconeogenesis. Catalyzes stereospecifically the conversion of dihydroxyacetone phosphate (DHAP) to D-glyceraldehyde-3-phosphate (G3P). This chain is Triosephosphate isomerase, found in Methanoculleus marisnigri (strain ATCC 35101 / DSM 1498 / JR1).